A 312-amino-acid chain; its full sequence is Transcription factor Ouib (312 aa).

In terms of domain architecture, ZAD spans 4 to 79 (IVCRVCGRQK…IKTQTKWLTI (76 aa)). Residues C6, C9, C52, and C55 each contribute to the Zn(2+) site. C2H2-type zinc fingers lie at residues 167–189 (YICE…MRKH), 195–217 (FGCK…HRVH), 223–245 (FACR…ERTH), 251–273 (YVCE…MVIH), and 279–303 (FRCD…SMMH).

In terms of tissue distribution, expressed predominantly in the prothoracic gland during embryonic and larval development.

It localises to the nucleus. Functionally, transcription factor required for ecdysteroid production in the prothoracic gland by activating transcription of the ecdysteroid biosynthesis gene spok. Binds to the 5'-AGCTTTATTATTTAG-3' DNA sequence in the spok enhancer region. This chain is Transcription factor Ouib, found in Drosophila melanogaster (Fruit fly).